A 949-amino-acid polypeptide reads, in one-letter code: Glycine dehydrogenase (decarboxylating) (949 aa).

The residue at position 697 (Lys697) is an N6-(pyridoxal phosphate)lysine.

This sequence belongs to the GcvP family. As to quaternary structure, the glycine cleavage system is composed of four proteins: P, T, L and H. Pyridoxal 5'-phosphate is required as a cofactor.

The catalysed reaction is N(6)-[(R)-lipoyl]-L-lysyl-[glycine-cleavage complex H protein] + glycine + H(+) = N(6)-[(R)-S(8)-aminomethyldihydrolipoyl]-L-lysyl-[glycine-cleavage complex H protein] + CO2. Its function is as follows. The glycine cleavage system catalyzes the degradation of glycine. The P protein binds the alpha-amino group of glycine through its pyridoxal phosphate cofactor; CO(2) is released and the remaining methylamine moiety is then transferred to the lipoamide cofactor of the H protein. This is Glycine dehydrogenase (decarboxylating) from Deinococcus radiodurans (strain ATCC 13939 / DSM 20539 / JCM 16871 / CCUG 27074 / LMG 4051 / NBRC 15346 / NCIMB 9279 / VKM B-1422 / R1).